We begin with the raw amino-acid sequence, 100 residues long: MSANQEEDKKPGDGGAHINLKVKGQDGNEVFFRIKRSTQLKKLMNAYCDRQSVDMNSIAFLFDGRRLRAEQTPDELDMEDGDEIDAMLHQTGGSGGGATA.

The span at 1-12 (MSANQEEDKKPG) shows a compositional bias: basic and acidic residues. Residues 1 to 21 (MSANQEEDKKPGDGGAHINLK) form a disordered region. Positions 16 to 93 (AHINLKVKGQ…IDAMLHQTGG (78 aa)) constitute a Ubiquitin-like domain. Residue glycine 93 forms a Glycyl lysine isopeptide (Gly-Lys) (interchain with K-? in acceptor proteins) linkage.

The protein belongs to the ubiquitin family. SUMO subfamily. As to quaternary structure, interacts with SAE2, SCE1, SIZ1 and MMS21. Interacts with HSFA2. Covalently attached to ABI5, FLD, GTE3, HSFA2 and ICE1.

It localises to the nucleus. It is found in the cytoplasm. Ubiquitin-like protein which can be covalently attached to target lysines as a monomer. Does not seem to be involved in protein degradation and may function as an antagonist of ubiquitin in the degradation process. Required for the massive protein sumoylation in the nucleus induced by heat shock and controlled by SIZ1. Involved in the regulation of the heat stress transcription factor HSFA2 in acquired thermotolerance. This Arabidopsis thaliana (Mouse-ear cress) protein is Small ubiquitin-related modifier 1.